The primary structure comprises 174 residues: MAYEKVNELNLKDTELCLGLPGRTEKIKEEQEVSCVKSNNKRLFEETRDEEESTPPTKTQIVGWPPVRSSRKNNNSVSYVKVSMDGAPYLRKIDLKTYKNYPELLKALENMFKVMIGEYCEREGYKGSGFVPTYEDKDGDWMLVGDVPWDMFSSSCKRLRIMKGSDAPALDSSL.

An EAR-like (transcriptional repression) motif is present at residues 16-20 (LCLGL). A disordered region spans residues 44–67 (FEETRDEEESTPPTKTQIVGWPPV). In terms of domain architecture, PB1 spans 77–164 (VSYVKVSMDG…SCKRLRIMKG (88 aa)).

It belongs to the Aux/IAA family. Homodimers and heterodimers. Interacts with the auxin-responsive protein IAA1. Interacts with TPL. As to expression, preferentially expressed in vegetative organs.

It localises to the nucleus. In terms of biological role, aux/IAA proteins are short-lived transcriptional factors that function as repressors of early auxin response genes at low auxin concentrations. Repression is thought to result from the interaction with auxin response factors (ARFs), proteins that bind to the auxin-responsive promoter element (AuxRE). Formation of heterodimers with ARF proteins may alter their ability to modulate early auxin response genes expression. In Arabidopsis thaliana (Mouse-ear cress), this protein is Auxin-responsive protein IAA2 (IAA2).